The primary structure comprises 351 residues: Soluble interferon alpha/beta receptor OPG204 (351 aa).

A signal peptide spans 1-23 (MKMKMMVRIYFVSLSLLLFHSYA). 2 Ig-like C2-type domains span residues 65–137 (LGEP…KNGD) and 155–237 (PKTY…IVVS). 2 cysteine pairs are disulfide-bonded: C73–C129 and C172–C221. 5 N-linked (GlcNAc...) asparagine; by host glycosylation sites follow: N117, N182, N261, N269, and N321. One can recognise an Ig-like V-type domain in the interval 246-345 (PSQDHRFKLI…HNYYFDKTLT (100 aa)). Residues C272 and C333 are joined by a disulfide bond.

The protein belongs to the interleukin-1 receptor family. As to quaternary structure, interacts with host IFNA1.

It is found in the secreted. In terms of biological role, counteracts the antiviral effects of host IFN-alpha/beta and key IFN-inducible proteins involved in viral RNA degradation suxh as host OAS1. Acts as a soluble IFN-alpha receptor and thus inhibits the interaction between host IFN-alpha and its receptor. This is Soluble interferon alpha/beta receptor OPG204 (OPG204) from Cynomys gunnisoni (Gunnison's prairie dog).